The sequence spans 60 residues: Large ribosomal subunit protein bL32 (60 aa).

The interval 1–60 (MAVQQNKKSRSARDMRRSHDALEASTLSVEKSTGEVHLRHHVSPEGVYRGRKVIDKGADE) is disordered. Residues 11-22 (SARDMRRSHDAL) show a composition bias toward basic and acidic residues.

It belongs to the bacterial ribosomal protein bL32 family.

This chain is Large ribosomal subunit protein bL32, found in Ectopseudomonas mendocina (strain ymp) (Pseudomonas mendocina).